A 1307-amino-acid polypeptide reads, in one-letter code: CRISPR-associated endonuclease Cas12a (1307 aa).

A WED-I (OBD-I) region spans residues 1 to 35 (MTQFEGFTNLYQVSKTLRFELIPQGKTLKHIQEQG). The interval 36–320 (FIEEDKARND…SDRNTLSFIL (285 aa)) is REC1 (helical-I). 47-51 (YKELK) lines the crRNA pocket. Residues 74–106 (ENLSAAIDSYRKEKTEETRNALIEEQATYRNAI) are a coiled coil. Residues 175-176 (NR) and 307-310 (KQIL) each bind crRNA. Residues 321 to 526 (EEFKSDEEVI…ARNYATKKPY (206 aa)) form a WED-II (helical-II) region. The WED-II (OBD-I) stretch occupies residues 527–598 (SVEKFKLNFQ…GFDKMYYDYF (72 aa)). Residues 599 to 607 (PDAAKMIPK) constitute a DNA-binding region (PAM-binding on target DNA). Positions 599–718 (PDAAKMIPKC…EYYAELNPLL (120 aa)) are PI (LHD). The segment at 719–884 (YHISFQRIAE…ITLNYQAANS (166 aa)) is WED-III (OBD-III). 752–761 (KGHHGKPNLH) provides a ligand contact to crRNA. The target DNA DNA-binding region spans 780 to 783 (KLNG). H800 (for pre-crRNA processing) is an active-site residue. Residue 806–808 (MLN) coordinates crRNA. Active-site for pre-crRNA processing residues include K809 and K860. Positions 885–940 (PSKFNQRVNAYLKEHPETPIIGIDRGERNLIYITVIDSTGKILEQRSLNTIQQFDY) are ruvC-I. Residue D908 is the For DNase activity of RuvC domain of the active site. The tract at residues 941 to 957 (QKKLDNREKERVAARQA) is bridge helix. A DNA-binding region (target DNA) is located at residues 951 to 968 (RVAARQAWSVVGTIKDLK). Residues 958–1066 (WSVVGTIKDL…TQSGFLFYVP (109 aa)) are ruvC-II. E993 serves as the catalytic For DNase activity of RuvC domain. The segment at residues 1051–1053 (SFA) is a DNA-binding region (target DNA). The nuclease domain stretch occupies residues 1067 to 1262 (APYTSKIDPL…FQNPEWPMDA (196 aa)). Residue R1226 is the For DNase activity of nuclease domain of the active site. D1263 functions as the For DNase activity of RuvC domain in the catalytic mechanism. The interval 1263 to 1307 (DANGAYHIALKGQLLLNHLKESKDLKLQNGISNQDWLAYIQELRN) is ruvC-III.

It belongs to the CRISPR-associated endonuclease Cas12a family. Monomer. Requires Mg(2+) as cofactor.

It catalyses the reaction Endonucleolytic cleavage to 5'-phosphodinucleotide and 5'-phosphooligonucleotide end-products.. The catalysed reaction is RNA = a 5'-hydroxy-ribonucleotide + n nucleoside-2',3'-cyclophosphates.. Functionally, CRISPR (clustered regularly interspaced short palindromic repeat), is an adaptive immune system that provides protection against mobile genetic elements (viruses, transposable elements and conjugative plasmids). CRISPR clusters contain sequences complementary to antecedent mobile elements and target invading nucleic acids. CRISPR clusters are transcribed and processed into CRISPR RNA (crRNA). Recognizes a short motif in the CRISPR repeat sequences (the 5' PAM or protospacer adjacent motif, TTTN in this organism) to help distinguish self versus nonself, as targets within the bacterial CRISPR locus do not have PAMs. Has dsDNA endonuclease activity, results in staggered 4-base 5' overhangs 19 and 22 bases downstream of the PAM on the non-targeted and targeted strand respectively. Non-target strand cleavage by the RuvC domain is probably a prerequisite of target strand cleavage by the Nuc domain. Protects E.coli against plasmids and bacteriophage M13mp18, phage T4 with hydroxymethyl or unmodified (but not glycosylated) cytosines and to a lesser extent against lambda and VpaE1 phage. In this CRISPR system correct processing of pre-crRNA requires only this protein and the CRISPR locus. The sequence is that of CRISPR-associated endonuclease Cas12a from Acidaminococcus sp. (strain BV3L6).